We begin with the raw amino-acid sequence, 333 residues long: Anthranilate phosphoribosyltransferase (333 aa).

5-phospho-alpha-D-ribose 1-diphosphate-binding positions include Gly-81, 84 to 85, Thr-89, 91 to 94, 109 to 117, and Ala-121; these read GN, NIST, and KHGNRSVSS. Gly-81 provides a ligand contact to anthranilate. Residue Ser-93 coordinates Mg(2+). An anthranilate-binding site is contributed by Asn-112. Arg-167 provides a ligand contact to anthranilate. Mg(2+)-binding residues include Asp-225 and Glu-226.

Belongs to the anthranilate phosphoribosyltransferase family. Homodimer. Mg(2+) is required as a cofactor.

The catalysed reaction is N-(5-phospho-beta-D-ribosyl)anthranilate + diphosphate = 5-phospho-alpha-D-ribose 1-diphosphate + anthranilate. It participates in amino-acid biosynthesis; L-tryptophan biosynthesis; L-tryptophan from chorismate: step 2/5. Catalyzes the transfer of the phosphoribosyl group of 5-phosphorylribose-1-pyrophosphate (PRPP) to anthranilate to yield N-(5'-phosphoribosyl)-anthranilate (PRA). The polypeptide is Anthranilate phosphoribosyltransferase (Haemophilus influenzae (strain ATCC 51907 / DSM 11121 / KW20 / Rd)).